A 511-amino-acid polypeptide reads, in one-letter code: 2,3-bisphosphoglycerate-independent phosphoglycerate mutase (511 aa).

Residues Asp-14 and Ser-64 each coordinate Mn(2+). Ser-64 acts as the Phosphoserine intermediate in catalysis. Substrate is bound by residues His-125, 155 to 156, Arg-187, Arg-193, 259 to 262, and Lys-333; these read RD and RADR. Positions 400, 404, 441, 442, and 460 each coordinate Mn(2+).

It belongs to the BPG-independent phosphoglycerate mutase family. As to quaternary structure, monomer. It depends on Mn(2+) as a cofactor.

The enzyme catalyses (2R)-2-phosphoglycerate = (2R)-3-phosphoglycerate. It participates in carbohydrate degradation; glycolysis; pyruvate from D-glyceraldehyde 3-phosphate: step 3/5. In terms of biological role, catalyzes the interconversion of 2-phosphoglycerate and 3-phosphoglycerate. This is 2,3-bisphosphoglycerate-independent phosphoglycerate mutase from Pseudomonas entomophila (strain L48).